The sequence spans 334 residues: 3-dehydroquinate synthase (334 aa).

This sequence belongs to the archaeal-type DHQ synthase family.

It carries out the reaction 2-amino-2,3,7-trideoxy-D-lyxo-hept-6-ulosonate + NAD(+) + H2O = 3-dehydroquinate + NH4(+) + NADH + H(+). Functionally, catalyzes the oxidative deamination and cyclization of 2-amino-3,7-dideoxy-D-threo-hept-6-ulosonic acid (ADH) to yield 3-dehydroquinate (DHQ), which is fed into the canonical shikimic pathway of aromatic amino acid biosynthesis. The chain is 3-dehydroquinate synthase from Korarchaeum cryptofilum (strain OPF8).